The following is a 3926-amino-acid chain: Protein bassoon (3926 aa).

Residues M1–I161 are disordered. G2 carries N-myristoyl glycine lipidation. Composition is skewed to pro residues over residues P15–G30 and P58–G72. Positions P23–G32 are 5 X 2 AA tandem repeats of P-G. Positions P61–G74 are 7 X 2 AA tandem repeats of P-G. Composition is skewed to polar residues over residues R90–G105 and Q130–S157. S145 carries the post-translational modification Phosphoserine. R148 bears the Omega-N-methylarginine mark. C4-type zinc fingers lie at residues C170–C193 and C198–C220. Disordered regions lie at residues T231–Q343 and S366–P459. Positions A233–H243 are enriched in polar residues. Residues S244 and S248 each carry the phosphoserine modification. Positions S366–P377 are enriched in polar residues. C4-type zinc fingers lie at residues C465–C488 and C493–C515. Disordered stretches follow at residues S524–G927 and G940–T1248. Low complexity predominate over residues P552–P569. 3 tandem repeats follow at residues K571–T577, K578–S584, and K585–K591. The interval K571–K591 is 3 X 7 AA tandem repeats of K-A-S-P-[LQ]-[APS]-[KST]. Over residues M619 to A631 the composition is skewed to pro residues. Polar residues predominate over residues Q671–L680. The segment covering S681–T698 has biased composition (low complexity). The segment covering F771–S787 has biased composition (acidic residues). The span at A788 to Q797 shows a compositional bias: basic and acidic residues. The segment covering S851–T862 has biased composition (acidic residues). R867 carries the post-translational modification Omega-N-methylarginine. A Phosphoserine modification is found at S970. The span at P984–S1001 shows a compositional bias: low complexity. Positions I1037 to T1092 form a coiled coil. Residues D1039 to L1052 show a composition bias toward acidic residues. Phosphoserine is present on residues S1040 and S1041. Basic and acidic residues predominate over residues L1053–R1066. S1090 is modified (phosphoserine). T1092 bears the Phosphothreonine mark. A phosphoserine mark is found at S1098 and S1104. Over residues E1107–S1122 the composition is skewed to basic and acidic residues. Composition is skewed to low complexity over residues C1123–D1133 and S1163–P1180. Residues L1181–A1208 are a coiled coil. Residues K1182–L1197 are compositionally biased toward basic and acidic residues. Residues Q1199–R1209 are compositionally biased toward low complexity. S1226 carries the post-translational modification Phosphoserine. A coiled-coil region spans residues R1276–E1294. Disordered stretches follow at residues M1298 to W1547 and R1570 to S1620. Positions S1322–S1332 are enriched in low complexity. T1343 is a glycosylation site (O-linked (GlcNAc) threonine). A compositionally biased stretch (basic and acidic residues) spans F1346–K1355. Composition is skewed to low complexity over residues S1358–S1367 and G1377–G1392. O-linked (GlcNAc) threonine glycosylation is present at T1384. Polar residues predominate over residues R1408 to D1434. Residues P1466 to P1493 show a composition bias toward low complexity. A phosphoserine mark is found at S1477, S1486, and S1488. Polar residues predominate over residues R1570 to T1598. The span at P1606–P1616 shows a compositional bias: pro residues. An omega-N-methylarginine mark is found at R1787 and R1791. Asymmetric dimethylarginine; alternate is present on R1801. Residue R1801 is modified to Omega-N-methylarginine; alternate. The residue at position 1813 (R1813) is an Omega-N-methylarginine. The tract at residues P1924–G1978 is disordered. Residues S1985 and S2041 each carry the phosphoserine modification. 2 positions are modified to omega-N-methylarginine: R2046 and R2076. Residues R2250, R2260, and R2266 each carry the asymmetric dimethylarginine modification. A disordered region spans residues A2287–E2309. T2314 carries an O-linked (GlcNAc) threonine glycan. Over residues G2324–A2341 the composition is skewed to low complexity. 2 disordered regions span residues G2324–E2370 and P2532–L2568. Residues R2351–P2476 are a coiled coil. Basic and acidic residues predominate over residues G2353–E2370. Residues S2533–E2543 are compositionally biased toward polar residues. S2570 bears the Phosphoserine mark. Phosphothreonine occurs at positions 2587 and 2614. The interval R2601–A2655 is disordered. The segment covering R2635–A2647 has biased composition (basic and acidic residues). A glycan (O-linked (GlcNAc) threonine) is linked at T2691. The interval E2721 to E3268 is interaction with DAO. S2802, S2851, and S2857 each carry phosphoserine. Residues T2845 to K2865 form a disordered region. T2936 is a glycosylation site (O-linked (GlcNAc) threonine). The stretch at S2939 to L2981 forms a coiled coil. S3013 carries the phosphoserine modification. Residues A3039–R3055 are compositionally biased toward low complexity. 3 disordered regions span residues A3039 to I3375, G3424 to H3551, and E3572 to S3897. A compositionally biased stretch (pro residues) spans Y3083 to P3095. A compositionally biased stretch (low complexity) spans A3165 to S3176. The span at S3205–P3228 shows a compositional bias: polar residues. The residue at position 3291 (S3291) is a Phosphoserine. Basic and acidic residues-rich tracts occupy residues G3321 to K3333, Q3363 to I3375, and G3465 to Q3477. Position 3373 is a phosphoserine (S3373). R3492 carries the omega-N-methylarginine modification. Composition is skewed to basic and acidic residues over residues V3540 to H3551, W3583 to D3593, L3628 to H3647, and H3657 to P3681. Over residues A3703–S3712 the composition is skewed to polar residues. The segment covering P3741–T3807 has biased composition (low complexity). R3808 carries the omega-N-methylarginine modification. Low complexity-rich tracts occupy residues A3849 to A3860 and G3882 to G3892.

Interacts with PCLO, ERC2/CAST1, RIMS1 and UNC13A. Interacts with TPRG1L. Interacts with DYNLL1 and DYNLL2; these interactions potentially link PTVs to dynein and myosin V motor complexes. Interacts with ATG5; this interaction is important for the regulation of presynaptic autophagy. Interacts (via C-terminus) with TRIO (via N-terminus). Interacts with CTBP1. Interacts with SIAH1; this interaction negatively regulates SIAH1 E3 ligase activity. Interacts (via coiled region) with DAO; the interaction is direct. Myristoylated. The N-terminal myristoylation is not sufficient for presynaptic localization. Exclusively expressed in brain.

The protein resides in the cytoplasm. It localises to the presynaptic active zone. Its subcellular location is the cytoskeleton. It is found in the cytoplasmic vesicle. The protein localises to the secretory vesicle. The protein resides in the synaptic vesicle membrane. Functionally, scaffold protein of the presynaptic cytomatrix at the active zone (CAZ) which is the place in the synapse where neurotransmitter is released. After synthesis, participates in the formation of Golgi-derived membranous organelles termed Piccolo-Bassoon transport vesicles (PTVs) that are transported along axons to sites of nascent synaptic contacts. At the presynaptic active zone, regulates the spatial organization of synaptic vesicle cluster, the protein complexes that execute membrane fusion and compensatory endocytosis. Also functions in processes other than assembly such as the regulation of specific presynaptic protein ubiquitination by interacting with SIAH1 or the regulation of presynaptic autophagy by associating with ATG5. Also mediates synapse to nucleus communication leading to reconfiguration of gene expression by associating with the transcriptional corepressor CTBP1 and by subsequently reducing the size of its pool available for nuclear import. Inhibits the activity of the proportion of DAO enzyme that localizes to the presynaptic active zone, which may modulate synaptic transmission. The protein is Protein bassoon of Homo sapiens (Human).